The sequence spans 166 residues: Regulatory protein RecX (166 aa).

The protein belongs to the RecX family.

It is found in the cytoplasm. In terms of biological role, modulates RecA activity. This chain is Regulatory protein RecX, found in Salmonella paratyphi C (strain RKS4594).